Consider the following 416-residue polypeptide: Hemagglutinin-esterase (416 aa).

Positions 1 to 14 (MLSLILFFPSFAFA) are cleaved as a signal peptide. Residues 4–121 (LILFFPSFAF…GVDSYMELKT (118 aa)) are esterase domain first part. The Virion surface segment spans residues 15–393 (VTPVTPYFGP…ESVDVISSSY (379 aa)). Residue serine 37 is the Nucleophile of the active site. Residues cysteine 41 and cysteine 57 are joined by a disulfide bond. 2 N-linked (GlcNAc...) asparagine; by host glycosylation sites follow: asparagine 59 and asparagine 76. Cystine bridges form between cysteine 88–cysteine 136, cysteine 108–cysteine 156, cysteine 192–cysteine 273, cysteine 200–cysteine 246, and cysteine 206–cysteine 213. The tract at residues 122 to 263 (SFNIKLNQMA…GTHNASIVGN (142 aa)) is receptor binding. N-linked (GlcNAc...) asparagine; by host glycans are attached at residues asparagine 257, asparagine 278, and asparagine 294. The interval 264–379 (FLFYPTKSYC…SCPQYVKLFD (116 aa)) is esterase domain second part. A disulfide bridge links cysteine 304 with cysteine 309. N-linked (GlcNAc...) asparagine; by host glycosylation occurs at asparagine 322. Histidine 328 functions as the Charge relay system in the catalytic mechanism. A glycan (N-linked (GlcNAc...) asparagine; by host) is linked at asparagine 343. A disulfide bond links cysteine 346 and cysteine 371. A helical membrane pass occupies residues 394 to 414 (FVATWVLLVVVVILIFVIISF). Over 415–416 (FC) the chain is Intravirion.

This sequence belongs to the influenza type C/coronaviruses hemagglutinin-esterase family. In terms of assembly, homodimer. In terms of processing, N-glycosylated.

It localises to the virion membrane. It is found in the host cell membrane. The catalysed reaction is N-acetyl-9-O-acetylneuraminate + H2O = N-acetylneuraminate + acetate + H(+). It catalyses the reaction N-acetyl-4-O-acetylneuraminate + H2O = N-acetylneuraminate + acetate + H(+). Structural protein that makes short spikes at the surface of the virus. Contains receptor binding and receptor-destroying activities. Mediates de-O-acetylation of N-acetyl-9-O-acetylneuraminic acid, which is probably the receptor determinant recognized by the virus on the surface of erythrocytes and susceptible cells. This receptor-destroying activity is important for virus release as it probably helps preventing self-aggregation and ensures the efficient spread of the progeny virus from cell to cell. May serve as a secondary viral attachment protein for initiating infection, the spike protein being the major one. Seems to be a 'luxury' protein that is not absolutely necessary for virus infection in culture. However, its presence in the virus may alter its pathogenicity. May become a target for both the humoral and the cellular branches of the immune system. This chain is Hemagglutinin-esterase (HE), found in Homo sapiens (Human).